Consider the following 403-residue polypeptide: S-adenosylmethionine synthase (403 aa).

Histidine 16 is an ATP binding site. Residue aspartate 18 participates in Mg(2+) binding. Glutamate 44 serves as a coordination point for K(+). The L-methionine site is built by glutamate 57 and glutamine 100. Positions 100–110 (QSPDIAQGVDR) are flexible loop. The interval 106-126 (QGVDRSYESRSGSASTDAHDL) is disordered. Residues 176 to 178 (DGK), 248 to 249 (KF), aspartate 257, 263 to 264 (RK), alanine 280, and lysine 284 each bind ATP. Aspartate 257 provides a ligand contact to L-methionine. Lysine 288 serves as a coordination point for L-methionine.

It belongs to the AdoMet synthase family. Homotetramer; dimer of dimers. Mg(2+) serves as cofactor. The cofactor is K(+).

The protein localises to the cytoplasm. The enzyme catalyses L-methionine + ATP + H2O = S-adenosyl-L-methionine + phosphate + diphosphate. It participates in amino-acid biosynthesis; S-adenosyl-L-methionine biosynthesis; S-adenosyl-L-methionine from L-methionine: step 1/1. Catalyzes the formation of S-adenosylmethionine (AdoMet) from methionine and ATP. The overall synthetic reaction is composed of two sequential steps, AdoMet formation and the subsequent tripolyphosphate hydrolysis which occurs prior to release of AdoMet from the enzyme. The protein is S-adenosylmethionine synthase of Clavibacter michiganensis subsp. michiganensis (strain NCPPB 382).